A 1196-amino-acid polypeptide reads, in one-letter code: Major DNA-binding protein (1196 aa).

A zinc finger spans residues 499-512 (CNLCTFDTRHACVH). 2 consecutive short sequence motifs (required for filament formation) follow at residues 843–844 (FW) and 1142–1144 (FNF). A disordered region spans residues 1158–1196 (GGPGAPGPAFAGRKRAFHGDDPFGEGPPDKKGDLTLDML). A required for nuclear localization region spans residues 1170 to 1196 (RKRAFHGDDPFGEGPPDKKGDLTLDML). Positions 1174–1196 (FHGDDPFGEGPPDKKGDLTLDML) are enriched in basic and acidic residues.

It belongs to the herpesviridae major DNA-binding protein family. In terms of assembly, homooligomers. Forms double-helical filaments necessary for the formation of replication compartments within the host nucleus. Interacts with the origin-binding protein. Interacts with the helicase primase complex; this interaction stimulates primer synthesis activity of the helicase-primase complex. Interacts with the DNA polymerase. Interacts with the alkaline exonuclease; this interaction increases its nuclease processivity. Interacts with ICP27; this interaction plays a role in the stimulation of late gene transcription.

It is found in the host nucleus. Its function is as follows. Plays several crucial roles in viral infection. Participates in the opening of the viral DNA origin to initiate replication by interacting with the origin-binding protein. May disrupt loops, hairpins and other secondary structures present on ssDNA to reduce and eliminate pausing of viral DNA polymerase at specific sites during elongation. Promotes viral DNA recombination by performing strand-transfer, characterized by the ability to transfer a DNA strand from a linear duplex to a complementary single-stranded DNA circle. Can also catalyze the renaturation of complementary single strands. Additionally, reorganizes the host cell nucleus, leading to the formation of prereplicative sites and replication compartments. This process is driven by the protein which can form double-helical filaments in the absence of DNA. This Homo sapiens (Human) protein is Major DNA-binding protein.